Consider the following 252-residue polypeptide: Imidazole glycerol phosphate synthase subunit HisF (252 aa).

Catalysis depends on residues Asp-11 and Asp-130.

Belongs to the HisA/HisF family. Heterodimer of HisH and HisF.

The protein resides in the cytoplasm. The catalysed reaction is 5-[(5-phospho-1-deoxy-D-ribulos-1-ylimino)methylamino]-1-(5-phospho-beta-D-ribosyl)imidazole-4-carboxamide + L-glutamine = D-erythro-1-(imidazol-4-yl)glycerol 3-phosphate + 5-amino-1-(5-phospho-beta-D-ribosyl)imidazole-4-carboxamide + L-glutamate + H(+). It participates in amino-acid biosynthesis; L-histidine biosynthesis; L-histidine from 5-phospho-alpha-D-ribose 1-diphosphate: step 5/9. Its function is as follows. IGPS catalyzes the conversion of PRFAR and glutamine to IGP, AICAR and glutamate. The HisF subunit catalyzes the cyclization activity that produces IGP and AICAR from PRFAR using the ammonia provided by the HisH subunit. The protein is Imidazole glycerol phosphate synthase subunit HisF of Bacillus cytotoxicus (strain DSM 22905 / CIP 110041 / 391-98 / NVH 391-98).